We begin with the raw amino-acid sequence, 275 residues long: Large ribosomal subunit protein uL2c (275 aa).

Residues 225–259 (KNPVDHPHGGGEGRAPIGRSTPVTPWGKPALGRRT) are disordered.

This sequence belongs to the universal ribosomal protein uL2 family. As to quaternary structure, part of the 50S ribosomal subunit.

It is found in the plastid. It localises to the cyanelle. The polypeptide is Large ribosomal subunit protein uL2c (rpl2) (Cyanophora paradoxa).